The primary structure comprises 102 residues: MPALTKAQLAELLFEKIGLNKRESKDMVDAFFDLVADSLLKGEDVKISGFGNFQIRTKAPRPGRNPRTGETIPIQARRVVTFHAGYKLKEQIQDQELVPLAP.

This sequence belongs to the bacterial histone-like protein family. Heterodimer of an alpha and a beta chain.

In terms of biological role, this protein is one of the two subunits of integration host factor, a specific DNA-binding protein that functions in genetic recombination as well as in transcriptional and translational control. The protein is Integration host factor subunit alpha of Albidiferax ferrireducens (strain ATCC BAA-621 / DSM 15236 / T118) (Rhodoferax ferrireducens).